A 549-amino-acid polypeptide reads, in one-letter code: Zinc finger protein 18 (549 aa).

Residues 41 to 123 (RQLFRQFRYQ…TLVESLKGDP (83 aa)) enclose the SCAN box domain. Residues 211–283 (DLGASLLPAA…YLHVNEKIPR (73 aa)) form the KRAB domain. 5 C2H2-type zinc fingers span residues 408–430 (PTCRECGKTFYRNSQLIFHQRTH), 436–458 (FQCTICKKAFLRSSDFVKHQRTH), 464–486 (CKCDYCGKGFSDFSGLRHHEKIH), 492–514 (YKCPICEKSFIQRSNFNRHQRVH), and 520–542 (YKCSHCGKSFSWSSSLDKHQRSH).

This sequence belongs to the krueppel C2H2-type zinc-finger protein family.

It localises to the nucleus. In terms of biological role, may be involved in transcriptional regulation. The protein is Zinc finger protein 18 (ZNF18) of Homo sapiens (Human).